Reading from the N-terminus, the 279-residue chain is Small ribosomal subunit protein uS3 (279 aa).

A KH type-2 domain is found at 17–86 (VDEYFLEKLE…NPQIDVQEVK (70 aa)). 2 stretches are compositionally biased toward low complexity: residues 206–233 (AEKK…STAA) and 241–252 (ESEAAEAVTPEG). Residues 206-279 (AEKKSPAAGA…VVKTDGDSQS (74 aa)) form a disordered region.

The protein belongs to the universal ribosomal protein uS3 family. As to quaternary structure, part of the 30S ribosomal subunit.

Its function is as follows. Binds the lower part of the 30S subunit head. The protein is Small ribosomal subunit protein uS3 of Methanocella arvoryzae (strain DSM 22066 / NBRC 105507 / MRE50).